Reading from the N-terminus, the 449-residue chain is Probable protoheme IX farnesyltransferase, mitochondrial (449 aa).

Residues 99–138 (TTSTTTTTNINENNIKNENNNENNNENSNNNNEQSIKSNQ) show a composition bias toward low complexity. Residues 99-140 (TTSTTTTTNINENNIKNENNNENNNENSNNNNEQSIKSNQTK) form a disordered region. The next 7 helical transmembrane spans lie at 163–183 (LTAIAGYVAACPIGAFDWVVL), 245–267 (MAVTPSLFVPGTLAACNVILYCW), 279–299 (TWIGAFVGAIPPLIGSVAATG), 303–323 (AIGMLLATFMYIWQIPHFLAL), 352–372 (SLAHALFGIPLPFIFDYFFNF), 374–394 (VHPITLTCMALSSASLALPFI), and 402–422 (LYIISLISLPITLFLSCLLRQ).

It belongs to the UbiA prenyltransferase family.

It is found in the mitochondrion membrane. In terms of biological role, converts protoheme IX and farnesyl diphosphate to heme O. The chain is Probable protoheme IX farnesyltransferase, mitochondrial (cox10) from Dictyostelium discoideum (Social amoeba).